The primary structure comprises 295 residues: Indole-3-glycerol phosphate synthase (295 aa).

This sequence belongs to the TrpC family.

The enzyme catalyses 1-(2-carboxyphenylamino)-1-deoxy-D-ribulose 5-phosphate + H(+) = (1S,2R)-1-C-(indol-3-yl)glycerol 3-phosphate + CO2 + H2O. It participates in amino-acid biosynthesis; L-tryptophan biosynthesis; L-tryptophan from chorismate: step 4/5. This chain is Indole-3-glycerol phosphate synthase, found in Prochlorococcus marinus (strain MIT 9301).